The primary structure comprises 289 residues: 4-diphosphocytidyl-2-C-methyl-D-erythritol kinase (289 aa).

Residue Lys-10 is part of the active site. 99 to 109 is an ATP binding site; that stretch reads PMGGGLGGGSS. Asp-141 is a catalytic residue.

Belongs to the GHMP kinase family. IspE subfamily. Homodimer.

It catalyses the reaction 4-CDP-2-C-methyl-D-erythritol + ATP = 4-CDP-2-C-methyl-D-erythritol 2-phosphate + ADP + H(+). It participates in isoprenoid biosynthesis; isopentenyl diphosphate biosynthesis via DXP pathway; isopentenyl diphosphate from 1-deoxy-D-xylulose 5-phosphate: step 3/6. Catalyzes the phosphorylation of the position 2 hydroxy group of 4-diphosphocytidyl-2C-methyl-D-erythritol. The sequence is that of 4-diphosphocytidyl-2-C-methyl-D-erythritol kinase from Enterobacter sp. (strain 638).